We begin with the raw amino-acid sequence, 2273 residues long: Nonribosomal peptide synthetase hasD (2273 aa).

The interval 100–446 (FHDQLQKHSS…AGLGLALGYF (347 aa)) is adenylation 1. The 77-residue stretch at 588 to 664 (ERGLGAVESV…NIAAAVVELS (77 aa)) folds into the Carrier 1 domain. The residue at position 625 (Ser-625) is an O-(pantetheine 4'-phosphoryl)serine. Residues 696-1120 (IAPMTDMQTR…AAQPDTDLSN (425 aa)) are condensation 1. An adenylation 2 region spans residues 1156-1487 (ENSIQAHPDI…SGVQVTPGYL (332 aa)). The region spanning 1634–1714 (DLETDTQRVL…DLSLAIDELV (81 aa)) is the Carrier 2 domain. O-(pantetheine 4'-phosphoryl)serine is present on Ser-1673. Residues 1735-2127 (GQLPLSYLEK…QDLEVDMEYD (393 aa)) are condensation 2. The segment at 2174 to 2200 (PVGLTPSHEGSAELTNGTNKTDSTTGQ) is disordered. Residues 2186-2200 (ELTNGTNKTDSTTGQ) are compositionally biased toward polar residues. One can recognise a Carrier 3 domain in the interval 2201–2273 (QELENNLTDV…LELATCAVII (73 aa)). Ser-2235 bears the O-(pantetheine 4'-phosphoryl)serine mark.

Belongs to the NRP synthetase family. The cofactor is pantetheine 4'-phosphate.

It functions in the pathway secondary metabolite biosynthesis. Nonribosomal peptide synthetase; part of the gene cluster that mediates the biosynthesis of hexadehydro-astechrome (HAS), a tryptophan-derived iron(III)-complex that acts as a virulence factor in infected mice. Within the pathway, the NRPS condenses tryptophan and alanine to produce the Trp-Ala dipeptide. The 7-dimethylallyltryptophan synthase hasE then catalyzes the prenylation of the hasD-tethered tryptophan or the resulting tethered Trp-Ala dipeptide at the C-7 position of the indole moiety. HAS biosynthesis continues via tethered intermediates with the succesive actions of the cytochrome P450 monooxygenase hasH, the O-methyltransferase hasC, and the FAD-linked oxidoreductase hasG. The resulting O-methylated diketopiperazine is then released from hasD. Finally, three O-methylated diketopiperazine molecules assemble in a trimeric complex with Fe(III) to produce hexadehydro-astechrome. In Aspergillus fumigatus (strain CBS 144.89 / FGSC A1163 / CEA10) (Neosartorya fumigata), this protein is Nonribosomal peptide synthetase hasD.